A 3303-amino-acid chain; its full sequence is Protein unc-80 homolog (3303 aa).

The span at 1-37 shows a compositional bias: low complexity; that stretch reads MVTNAAGTAATGGATSNTTNNNNLQTNNNSHGANNNN. The interval 1–43 is disordered; the sequence is MVTNAAGTAATGGATSNTTNNNNLQTNNNSHGANNNNDDFDFD. The helical transmembrane segment at 202-222 threads the bilayer; the sequence is LFSVPTITLFVYLFAPIIHHL. Disordered stretches follow at residues 284–316, 361–422, 491–512, 526–546, 1036–1067, 1443–1563, and 1627–1671; these read LSAD…VSSP, LQQQ…SESI, LYQG…KDYI, AEEP…KKKR, FRRR…SERN, LHEP…DDTA, and VEPT…KDRI. Positions 361–377 are enriched in low complexity; sequence LQQQQSQSRRGSRQSMN. Composition is skewed to basic and acidic residues over residues 378–391 and 401–422; these read SRDK…KFEF and SMKE…SESI. Polar residues predominate over residues 495–505; that stretch reads PGSNSRDSPGS. The span at 1058 to 1067 shows a compositional bias: polar residues; that stretch reads SDSTSSSERN. The segment covering 1490–1499 has biased composition (basic residues); the sequence is FKRRSLKLRR. Polar residues predominate over residues 1546–1556; the sequence is DDQQPESPTDS. Basic and acidic residues predominate over residues 1660–1671; it reads KRKDSLSRKDRI. A run of 3 helical transmembrane segments spans residues 1969–1989, 2018–2038, and 2048–2068; these read VYEI…ALFL, LPQQ…MFYV, and LVGS…GIMF. Disordered stretches follow at residues 2518–2550, 3003–3158, and 3170–3262; these read NGPY…FEEE, EEKR…FKAQ, and FRHS…YRDN. Positions 3003–3018 are enriched in basic and acidic residues; it reads EEKRYDRESSEQKKSD. 2 stretches are compositionally biased toward polar residues: residues 3033-3053 and 3071-3106; these read QRPS…SHSH and PSDT…SQSG. Over residues 3124-3134 the composition is skewed to gly residues; the sequence is SGHGSGGGIGT. Residues 3135–3152 are compositionally biased toward low complexity; sequence GAASAVPSHLSHSQSLQQ. The segment covering 3198–3217 has biased composition (basic residues); sequence SRLQRSKAASRKTFRLKRSR. Polar residues predominate over residues 3226-3239; that stretch reads IVTSQEEQAPQAQA. Residues 3246–3257 are compositionally biased toward low complexity; that stretch reads SWDSVSQTSSTS.

Belongs to the unc-80 family. In terms of assembly, interacts with unc79 and na. Can interact with unc79 independently of na.

The protein resides in the membrane. Functionally, component of the na (narrow abdomen) sodium channel complex. In the circadian clock neurons it functions with na and unc79 to promote circadian rhythmicity. In Drosophila melanogaster (Fruit fly), this protein is Protein unc-80 homolog.